Here is a 654-residue protein sequence, read N- to C-terminus: Peptide-N(4)-(N-acetyl-beta-glucosaminyl)asparagine amidase (654 aa).

At Ala2 the chain carries N-acetylalanine. Residues Glu30 to Lys91 form the PUB domain. Basic and acidic residues predominate over residues Arg112–Glu123. The interval Arg112 to Pro167 is disordered. Over residues Ser124 to Pro167 the composition is skewed to polar residues. Thr137 bears the Phosphothreonine mark. Cys250, Cys253, Cys283, and Cys286 together coordinate Zn(2+). Cys309 serves as the catalytic Nucleophile. Residues His336 and Asp353 contribute to the active site. The PAW domain maps to Glu454–Leu654.

This sequence belongs to the transglutaminase-like superfamily. PNGase family. As to quaternary structure, component of a complex required to couple retrotranslocation, ubiquitination and deglycosylation composed of NGLY1, SAKS1, AMFR, VCP and RAD23B. Interacts with the proteasome components RAD23B and PSMC1. Interacts with directly with VCP. Interacts with DERL1, bringing it close to the endoplasmic reticulum membrane. Interacts with SAKS1. The cofactor is Zn(2+).

Its subcellular location is the cytoplasm. It carries out the reaction Hydrolysis of an N(4)-(acetyl-beta-D-glucosaminyl)asparagine residue in which the glucosamine residue may be further glycosylated, to yield a (substituted) N-acetyl-beta-D-glucosaminylamine and a peptide containing an aspartate residue.. With respect to regulation, inhibited by Z-VAD-fmk, a well-known caspase inhibitor, which inhibits enzyme activity through covalent binding of the carbohydrate to the single Cys-306 residue. Specifically deglycosylates the denatured form of N-linked glycoproteins in the cytoplasm and assists their proteasome-mediated degradation. Cleaves the beta-aspartyl-glucosamine (GlcNAc) of the glycan and the amide side chain of Asn, converting Asn to Asp. Prefers proteins containing high-mannose over those bearing complex type oligosaccharides. Can recognize misfolded proteins in the endoplasmic reticulum that are exported to the cytosol to be destroyed and deglycosylate them, while it has no activity toward native proteins. Deglycosylation is a prerequisite for subsequent proteasome-mediated degradation of some, but not all, misfolded glycoproteins. In Macaca fascicularis (Crab-eating macaque), this protein is Peptide-N(4)-(N-acetyl-beta-glucosaminyl)asparagine amidase (NGLY1).